Consider the following 210-residue polypeptide: C4-dicarboxylate TRAP transporter small permease protein DctQ (210 aa).

Transmembrane regions (helical) follow at residues 13–33, 77–97, 113–133, and 160–180; these read EGLIAFLLAAMTLVTFVYVVL, ALFAWLIFLGIAYGVRTAGHL, VLGVIACLACLGYAGLLCVAS, and IGLIVPVGFALVFIRFAEILV.

It belongs to the TRAP transporter small permease family. In terms of assembly, the complex comprises the extracytoplasmic solute receptor protein DctP, and the two transmembrane proteins DctQ and DctM.

It is found in the cell inner membrane. In terms of biological role, part of the tripartite ATP-independent periplasmic (TRAP) transport system DctPQM involved in C4-dicarboxylates uptake. In Pseudomonas aeruginosa (strain ATCC 15692 / DSM 22644 / CIP 104116 / JCM 14847 / LMG 12228 / 1C / PRS 101 / PAO1), this protein is C4-dicarboxylate TRAP transporter small permease protein DctQ.